A 709-amino-acid polypeptide reads, in one-letter code: Nicastrin (709 aa).

The N-terminal stretch at 1–33 is a signal peptide; the sequence is MATAGGGSGADPGSRGLLRLLSFCVLLAGLCRG. Over 34–669 the chain is Extracellular; it reads NSVERKIYIP…IFLIASKELE (636 aa). 2 N-linked (GlcNAc...) asparagine glycosylation sites follow: N45 and N55. Cystine bridges form between C50-C62 and C140-C159. N-linked (GlcNAc...) asparagine glycosylation is found at N187, N200, and N204. Cystine bridges form between C195-C213 and C230-C248. N264, N387, N417, N435, N464, N506, N530, N562, N573, N580, and N612 each carry an N-linked (GlcNAc...) asparagine glycan. An intrachain disulfide couples C586 to C620. A helical transmembrane segment spans residues 670–690; it reads LITLTVGFGILIFSLIVTYCI. The Cytoplasmic segment spans residues 691-709; that stretch reads NAKADVLFIAPREPGAVSY.

The protein belongs to the nicastrin family. Component of the gamma-secretase complex. The functional gamma-secretase complex is composed of at least four polypeptides: a presenilin homodimer (PSEN1 or PSEN2), nicastrin (NCSTN), APH1 (APH1A or APH1B) and PSENEN/PEN2. Binds to proteolytic processed C-terminal fragments C83 and C99 of the amyloid precursor protein (APP). Interacts with PSEN1 and PSEN2. Post-translationally, N-glycosylated. Detected in brain (at protein level). Widely expressed.

Its subcellular location is the membrane. It is found in the cytoplasmic vesicle membrane. The protein resides in the melanosome. Essential subunit of the gamma-secretase complex, an endoprotease complex that catalyzes the intramembrane cleavage of integral membrane proteins such as Notch receptors and APP (amyloid-beta precursor protein). The gamma-secretase complex plays a role in Notch and Wnt signaling cascades and regulation of downstream processes via its role in processing key regulatory proteins, and by regulating cytosolic CTNNB1 levels. This chain is Nicastrin (NCSTN), found in Homo sapiens (Human).